The chain runs to 687 residues: DNA ligase (687 aa).

NAD(+) is bound by residues 34-38 (DAEYD), 83-84 (SL), and glutamate 117. Residue lysine 119 is the N6-AMP-lysine intermediate of the active site. Residues arginine 140, glutamate 182, lysine 298, and lysine 322 each coordinate NAD(+). Cysteine 416, cysteine 419, cysteine 434, and cysteine 439 together coordinate Zn(2+). One can recognise a BRCT domain in the interval 609-687 (EARGPFAGKT…EEEFVRLLKE (79 aa)).

Belongs to the NAD-dependent DNA ligase family. LigA subfamily. Mg(2+) serves as cofactor. The cofactor is Mn(2+).

It carries out the reaction NAD(+) + (deoxyribonucleotide)n-3'-hydroxyl + 5'-phospho-(deoxyribonucleotide)m = (deoxyribonucleotide)n+m + AMP + beta-nicotinamide D-nucleotide.. DNA ligase that catalyzes the formation of phosphodiester linkages between 5'-phosphoryl and 3'-hydroxyl groups in double-stranded DNA using NAD as a coenzyme and as the energy source for the reaction. It is essential for DNA replication and repair of damaged DNA. In Anaeromyxobacter sp. (strain K), this protein is DNA ligase.